The sequence spans 2718 residues: Zinc finger protein 40 (2718 aa).

Disordered regions lie at residues 58–182 (HLKK…CISS), 210–256 (LSQK…AESQ), and 335–373 (GLTS…PMPI). Serine 141 is modified (phosphoserine). Positions 142–158 (ELRRWRSEGADPAKFSD) are enriched in basic and acidic residues. Polar residues-rich tracts occupy residues 164–182 (DSSS…CISS) and 237–256 (KNSS…AESQ). The segment at 406-428 (YICEYCNRACAKPSVLLKHIRSH) adopts a C2H2-type 1 zinc-finger fold. Threonine 429 carries the phosphothreonine modification. The segment at 434-456 (YPCVTCGFSFKTKSNLYKHKKSH) adopts a C2H2-type 2 zinc-finger fold. Phosphoserine is present on residues serine 476, serine 479, serine 492, serine 495, serine 571, and serine 577. Residues 484–511 (SIHSDVEDSGESEEEGATDERQHDLGAM) are disordered. Residues 490–500 (EDSGESEEEGA) show a composition bias toward acidic residues. The interval 574-727 (RTDSPKAMDP…TPSALPTGEK (154 aa)) is disordered. The segment covering 576–585 (DSPKAMDPKP) has biased composition (basic and acidic residues). Residues 588-612 (SSAQKQKDLQVTNVQPLSANMSQGG) are compositionally biased toward polar residues. Positions 617–626 (ETNENSHQKG) are enriched in basic and acidic residues. 2 stretches are compositionally biased toward polar residues: residues 644–687 (AQLQ…QTVS) and 698–721 (STEQ…TPSA). 2 positions are modified to phosphoserine: serine 670 and serine 681. A CCHC HIVEP-type zinc finger spans residues 956-986 (GTMFECETCRNRYRKLENFENHKKFYCSELH). A disordered region spans residues 1022 to 1062 (WEQTPQIRKRRKMKSVGDDEELQQNESGTSPKSSEGLQFQN). Residues serine 1036, serine 1051, serine 1091, serine 1158, serine 1161, and serine 1180 each carry the phosphoserine modification. Residues 1045–1062 (QNESGTSPKSSEGLQFQN) are compositionally biased toward polar residues. The disordered stretch occupies residues 1138–1169 (HTNSLSRPNSFDKPEPFERASPVSFQELNRTG). Polar residues predominate over residues 1160-1169 (VSFQELNRTG). Basic and acidic residues-rich tracts occupy residues 1202 to 1219 (LRGE…ERHV) and 1246 to 1259 (DLEA…KSEK). Disordered stretches follow at residues 1202–1282 (LRGE…PKKK), 1384–1414 (RSKS…SRVG), and 1523–1548 (SHQS…VLSG). Threonine 1268 carries the phosphothreonine modification. 2 stretches are compositionally biased toward low complexity: residues 1394–1406 (TPPQ…ELQP) and 1523–1536 (SHQS…VSTQ). 4 positions are modified to phosphoserine: serine 1735, serine 1740, serine 1749, and serine 1753. Positions 1871-1883 (VRSSPAPSENTHI) are enriched in polar residues. The disordered stretch occupies residues 1871 to 1911 (VRSSPAPSENTHISPLKCTDNNQERKSPGVKNQGDKVNIQE). Phosphoserine occurs at positions 1884 and 2033. 2 consecutive C2H2-type zinc fingers follow at residues 2088–2110 (YICE…IRTH) and 2116–2140 (YHCT…SKAH). 4 disordered regions span residues 2155-2228 (DEQD…PVST), 2265-2303 (SDYN…HQMS), 2327-2381 (SPSS…THLF), and 2572-2718 (PASQ…VIAT). Residues 2164–2175 (EKQRFSYERSGY) show a composition bias toward basic and acidic residues. Residues 2176–2198 (DLEESDGPDEDDNENEDDDEDSQ) are compositionally biased toward acidic residues. Polar residues-rich tracts occupy residues 2199–2226 (AESV…QDPV) and 2288–2300 (TIPS…SPCH). Serine 2327 and serine 2599 each carry phosphoserine. The segment covering 2573 to 2608 (ASQSKACETQPKQTSVASANQVSRTESPQGLPTVQR) has biased composition (polar residues). The span at 2623-2637 (DHARLDGLSKMDTEK) shows a compositional bias: basic and acidic residues. The span at 2651 to 2663 (TSIQGQPASTSQP) shows a compositional bias: polar residues. A phosphoserine mark is found at serine 2669 and serine 2682.

As to quaternary structure, interacts with UTP4.

The protein resides in the nucleus. Its subcellular location is the cytoplasm. Its function is as follows. This protein specifically binds to the DNA sequence 5'-GGGACTTTCC-3' which is found in the enhancer elements of numerous viral promoters such as those of SV40, CMV, or HIV-1. In addition, related sequences are found in the enhancer elements of a number of cellular promoters, including those of the class I MHC, interleukin-2 receptor, and interferon-beta genes. It may act in T-cell activation. Involved in activating HIV-1 gene expression. Isoform 2 and isoform 3 also bind to the IPCS (IRF1 and p53 common sequence) DNA sequence in the promoter region of interferon regulatory factor 1 and p53 genes and are involved in transcription regulation of these genes. Isoform 2 does not activate HIV-1 gene expression. Isoform 2 and isoform 3 may be involved in apoptosis. This is Zinc finger protein 40 (HIVEP1) from Homo sapiens (Human).